The primary structure comprises 256 residues: Type III pantothenate kinase (256 aa).

Position 6-13 (6-13 (DVGNTNIV)) interacts with ATP. 107–110 (GADR) is a binding site for substrate. Asp-109 (proton acceptor) is an active-site residue. Asp-129 serves as a coordination point for K(+). Residue Thr-132 coordinates ATP. Thr-184 contacts substrate.

It belongs to the type III pantothenate kinase family. Homodimer. The cofactor is NH4(+). Requires K(+) as cofactor.

The protein localises to the cytoplasm. The catalysed reaction is (R)-pantothenate + ATP = (R)-4'-phosphopantothenate + ADP + H(+). The protein operates within cofactor biosynthesis; coenzyme A biosynthesis; CoA from (R)-pantothenate: step 1/5. In terms of biological role, catalyzes the phosphorylation of pantothenate (Pan), the first step in CoA biosynthesis. In Pelotomaculum thermopropionicum (strain DSM 13744 / JCM 10971 / SI), this protein is Type III pantothenate kinase.